The primary structure comprises 480 residues: Aspartyl/glutamyl-tRNA(Asn/Gln) amidotransferase subunit B (480 aa).

This sequence belongs to the GatB/GatE family. GatB subfamily. In terms of assembly, heterotrimer of A, B and C subunits.

It catalyses the reaction L-glutamyl-tRNA(Gln) + L-glutamine + ATP + H2O = L-glutaminyl-tRNA(Gln) + L-glutamate + ADP + phosphate + H(+). The catalysed reaction is L-aspartyl-tRNA(Asn) + L-glutamine + ATP + H2O = L-asparaginyl-tRNA(Asn) + L-glutamate + ADP + phosphate + 2 H(+). Its function is as follows. Allows the formation of correctly charged Asn-tRNA(Asn) or Gln-tRNA(Gln) through the transamidation of misacylated Asp-tRNA(Asn) or Glu-tRNA(Gln) in organisms which lack either or both of asparaginyl-tRNA or glutaminyl-tRNA synthetases. The reaction takes place in the presence of glutamine and ATP through an activated phospho-Asp-tRNA(Asn) or phospho-Glu-tRNA(Gln). The polypeptide is Aspartyl/glutamyl-tRNA(Asn/Gln) amidotransferase subunit B (Caldicellulosiruptor saccharolyticus (strain ATCC 43494 / DSM 8903 / Tp8T 6331)).